We begin with the raw amino-acid sequence, 783 residues long: Protein involved in starch initiation 1 (783 aa).

Residues 1–27 (MGFSQAIRLNLASFSSPSPCDYCLTRV) constitute a chloroplast transit peptide. Coiled-coil stretches lie at residues 128-309 (LHDA…LKEE), 345-432 (LVFS…LELA), and 457-512 (LQEK…LKAL).

In terms of assembly, interacts with PTST2; the interaction is essential for the initiation of starch granules biosynthesis in leaf chloroplasts. Interacts with SS4; the interaction is essential for the initiation of starch granules biosynthesis in leaf chloroplasts.

The protein localises to the plastid. It is found in the chloroplast. Required for the initiation of starch granules biosynthesis in leaf chloroplasts. Involved in determining starch granule number and size in chloroplasts. The chain is Protein involved in starch initiation 1 from Arabidopsis thaliana (Mouse-ear cress).